Consider the following 233-residue polypeptide: Lipoprotein-releasing system ATP-binding protein LolD (233 aa).

Positions 10 to 233 constitute an ABC transporter domain; that stretch reads YRLEGVGKEY…AGELYDQHRP (224 aa). Residue 46-53 participates in ATP binding; sequence GASGSGKS.

This sequence belongs to the ABC transporter superfamily. Lipoprotein translocase (TC 3.A.1.125) family. In terms of assembly, the complex is composed of two ATP-binding proteins (LolD) and two transmembrane proteins (LolC and LolE).

The protein resides in the cell inner membrane. In terms of biological role, part of the ABC transporter complex LolCDE involved in the translocation of mature outer membrane-directed lipoproteins, from the inner membrane to the periplasmic chaperone, LolA. Responsible for the formation of the LolA-lipoprotein complex in an ATP-dependent manner. This is Lipoprotein-releasing system ATP-binding protein LolD from Nitratidesulfovibrio vulgaris (strain ATCC 29579 / DSM 644 / CCUG 34227 / NCIMB 8303 / VKM B-1760 / Hildenborough) (Desulfovibrio vulgaris).